The chain runs to 362 residues: Phosphoserine aminotransferase (362 aa).

Residue Arg42 participates in L-glutamate binding. Pyridoxal 5'-phosphate contacts are provided by residues 76–77 (AS), Trp102, Thr152, Asp173, and Gln196. Lys197 carries the N6-(pyridoxal phosphate)lysine modification. 238–239 (NT) lines the pyridoxal 5'-phosphate pocket.

Belongs to the class-V pyridoxal-phosphate-dependent aminotransferase family. SerC subfamily. As to quaternary structure, homodimer. It depends on pyridoxal 5'-phosphate as a cofactor.

It localises to the cytoplasm. The enzyme catalyses O-phospho-L-serine + 2-oxoglutarate = 3-phosphooxypyruvate + L-glutamate. It catalyses the reaction 4-(phosphooxy)-L-threonine + 2-oxoglutarate = (R)-3-hydroxy-2-oxo-4-phosphooxybutanoate + L-glutamate. It participates in amino-acid biosynthesis; L-serine biosynthesis; L-serine from 3-phospho-D-glycerate: step 2/3. Its pathway is cofactor biosynthesis; pyridoxine 5'-phosphate biosynthesis; pyridoxine 5'-phosphate from D-erythrose 4-phosphate: step 3/5. Its function is as follows. Catalyzes the reversible conversion of 3-phosphohydroxypyruvate to phosphoserine and of 3-hydroxy-2-oxo-4-phosphonooxybutanoate to phosphohydroxythreonine. This chain is Phosphoserine aminotransferase, found in Chromobacterium violaceum (strain ATCC 12472 / DSM 30191 / JCM 1249 / CCUG 213 / NBRC 12614 / NCIMB 9131 / NCTC 9757 / MK).